The following is a 572-amino-acid chain: MARILITSALPYINGVKHLGNLAGSMLPADVYARFQRLRGHDVLYVCATDEHGTPAELAADAAGMDVRAYCDEQHDIQKRSGEGFSLSYDYFGRTSNAPNIRLTQHFAQVLEEKGLIAERVEEQVFSIDDDRFLPDRYVEGTCPHCGFERARGDQCDNCGRLLEPTDLKEPYSKISGSKNLEVRETKHLHLVQTQMETKIRDWVDASTEWPSLAKSIAYKWLDEGLRDRSITRDLKWGVPVAQDGTPREGFEGKVFYVWFDAPIGYIGATVEWAEAGGGDWESWWRTDKGADDVTYVQFMGKDNVAFHTVSFPATILGSEEPWKTVDKLKAFNWLTWYGGKFSTSEKRGVFMDQALDILPGDYWRWYLTANAPEGSDAAFTWEHFQGLINSDLANVLGNFVNRITKYTVSKFDGTLPSAGTPGENEAWMAAELDQRLPALVANMEAMEFRKAAAEVRAIWAAGNEYLTKAEPWVKYKSDVDAAAVGVRTGLNLVALFGILAQPFIPEAASKILDALGVPDDRRSWEFDGPASALLDALPHGMAITPPAVLFAKIEDAQVAEWTERFGGAPEA.

A 'HIGH' region motif is present at residues 11–21 (PYINGVKHLGN). Positions 143, 146, 156, and 159 each coordinate Zn(2+). Positions 341–345 (KFSTS) match the 'KMSKS' region motif. Threonine 344 is a binding site for ATP.

It belongs to the class-I aminoacyl-tRNA synthetase family. MetG type 1 subfamily. As to quaternary structure, monomer. The cofactor is Zn(2+).

The protein resides in the cytoplasm. The enzyme catalyses tRNA(Met) + L-methionine + ATP = L-methionyl-tRNA(Met) + AMP + diphosphate. Functionally, is required not only for elongation of protein synthesis but also for the initiation of all mRNA translation through initiator tRNA(fMet) aminoacylation. This Maricaulis maris (strain MCS10) (Caulobacter maris) protein is Methionine--tRNA ligase.